The primary structure comprises 131 residues: Profilin-2 (131 aa).

The protein belongs to the profilin family. As to quaternary structure, occurs in many kinds of cells as a complex with monomeric actin in a 1:1 ratio.

It is found in the cytoplasm. It localises to the cytoskeleton. In terms of biological role, binds to actin and affects the structure of the cytoskeleton. At high concentrations, profilin prevents the polymerization of actin, whereas it enhances it at low concentrations. By binding to PIP2, it inhibits the formation of IP3 and DG. The polypeptide is Profilin-2 (Ambrosia artemisiifolia (Common ragweed)).